The primary structure comprises 393 residues: Zinc-regulated GTPase metalloprotein activator 1 (393 aa).

A psi-PxLVp motif motif is present at residues Glu-16 to Pro-23. Position 47–54 (Gly-47–Thr-54) interacts with GTP. The Zn(2+) site is built by Cys-105, Cys-107, and Cys-108. Residues Cys-105–Cys-108 carry the CXCC motif motif. Residues Cys-108–Asp-112 and Asn-201–Asp-204 each bind GTP. Residues Ile-271–Val-374 enclose the CobW C-terminal domain.

This sequence belongs to the SIMIBI class G3E GTPase family. ZNG1 subfamily. Present at high level in the nuclei of the ureteric bud cells in the developing kidneys.

It localises to the nucleus. The enzyme catalyses GTP + H2O = GDP + phosphate + H(+). Functionally, zinc chaperone that directly transfers zinc cofactor to target metalloproteins, thereby activating them. Catalyzes zinc insertion into the active site of methionine aminopeptidase METAP1, which function to cleave the initiator methionine from polypeptides during or after protein translation. Mechanistically, the N-terminal psi-PxLVp motif binds to the C6H2-type zinc finger of inactive form of METAP1. After formation of the docked complex, zinc is transferred from the CXCC motif in the GTPase domain of ZNG1 to the zinc binding site in the peptidase domain of METAP1 in a process requiring GTP hydrolysis. GTP/GDP exchange is required for release of active METAP1. The sequence is that of Zinc-regulated GTPase metalloprotein activator 1 (Zng1) from Mus musculus (Mouse).